Reading from the N-terminus, the 443-residue chain is Serine/threonine-protein kinase ISR1 (443 aa).

Residues 135-415 (LPSNKLVGQG…LRNDLFQDWK (281 aa)) enclose the Protein kinase domain. ATP-binding positions include 141 to 149 (VGQGSYSYV) and lysine 169. Aspartate 280 serves as the catalytic Proton acceptor.

It belongs to the protein kinase superfamily. Ser/Thr protein kinase family.

The enzyme catalyses L-seryl-[protein] + ATP = O-phospho-L-seryl-[protein] + ADP + H(+). It carries out the reaction L-threonyl-[protein] + ATP = O-phospho-L-threonyl-[protein] + ADP + H(+). Its function is as follows. Probable serine/threonine protein kinase which may function redundantly with MPK1-independent branch of the PCK1 pathway that is presumed to be required for the tolerance to high temperatures and staurosporine. In Saccharomyces cerevisiae (strain ATCC 204508 / S288c) (Baker's yeast), this protein is Serine/threonine-protein kinase ISR1 (ISR1).